The chain runs to 184 residues: Elongation factor P (184 aa).

The protein belongs to the elongation factor P family.

The protein resides in the cytoplasm. The protein operates within protein biosynthesis; polypeptide chain elongation. Its function is as follows. Involved in peptide bond synthesis. Stimulates efficient translation and peptide-bond synthesis on native or reconstituted 70S ribosomes in vitro. Probably functions indirectly by altering the affinity of the ribosome for aminoacyl-tRNA, thus increasing their reactivity as acceptors for peptidyl transferase. The chain is Elongation factor P from Thermus thermophilus (strain ATCC BAA-163 / DSM 7039 / HB27).